We begin with the raw amino-acid sequence, 60 residues long: Ferredoxin-1 (60 aa).

4Fe-4S ferredoxin-type domains lie at 2–27 (LYIT…SAGD) and 28–60 (DIYV…IVQG). Residues Cys-8, Cys-11, Cys-14, Cys-18, Cys-37, Cys-40, Cys-48, and Cys-52 each contribute to the [4Fe-4S] cluster site.

[4Fe-4S] cluster is required as a cofactor.

Its function is as follows. Ferredoxins are iron-sulfur proteins that transfer electrons in a wide variety of metabolic reactions. This chain is Ferredoxin-1, found in Chlorobium limicola.